The sequence spans 165 residues: uncharacterized protein (165 aa).

The segment at 1 to 36 (MTRLCLPRPEAREDPIPVPPRGLGAGEGSGSPVRPP) is disordered. Residues 135-155 (LLLLMGLGPLLRACGMPLTLL) form a helical membrane-spanning segment.

Its subcellular location is the membrane. This is an uncharacterized protein from Homo sapiens (Human).